The primary structure comprises 399 residues: Elongation factor Tu (399 aa).

In terms of domain architecture, tr-type G spans 10-204 (KDHVNIGTIG…AVDDYIDTPE (195 aa)). The tract at residues 19-26 (GHVDHGKT) is G1. 19–26 (GHVDHGKT) provides a ligand contact to GTP. Thr26 lines the Mg(2+) pocket. The tract at residues 60–64 (GITIN) is G2. Positions 81 to 84 (DCPG) are G3. Residues 81–85 (DCPGH) and 136–139 (NKKD) contribute to the GTP site. The segment at 136-139 (NKKD) is G4. Residues 174–176 (SAL) form a G5 region.

The protein belongs to the TRAFAC class translation factor GTPase superfamily. Classic translation factor GTPase family. EF-Tu/EF-1A subfamily. In terms of assembly, monomer.

It is found in the cytoplasm. The catalysed reaction is GTP + H2O = GDP + phosphate + H(+). Functionally, GTP hydrolase that promotes the GTP-dependent binding of aminoacyl-tRNA to the A-site of ribosomes during protein biosynthesis. The polypeptide is Elongation factor Tu (Synechocystis sp. (strain ATCC 27184 / PCC 6803 / Kazusa)).